Here is a 217-residue protein sequence, read N- to C-terminus: Protein-methionine-sulfoxide reductase heme-binding subunit MsrQ (217 aa).

4 helical membrane-spanning segments follow: residues Met82 to Asp102, Pro118 to Thr138, Trp150 to Trp170, and Glu180 to Trp200.

Belongs to the MsrQ family. As to quaternary structure, heterodimer of a catalytic subunit (MsrP) and a heme-binding subunit (MsrQ). FMN is required as a cofactor. It depends on heme b as a cofactor.

It localises to the cell inner membrane. In terms of biological role, part of the MsrPQ system that repairs oxidized periplasmic proteins containing methionine sulfoxide residues (Met-O), using respiratory chain electrons. Thus protects these proteins from oxidative-stress damage caused by reactive species of oxygen and chlorine generated by the host defense mechanisms. MsrPQ is essential for the maintenance of envelope integrity under bleach stress, rescuing a wide series of structurally unrelated periplasmic proteins from methionine oxidation. MsrQ provides electrons for reduction to the reductase catalytic subunit MsrP, using the quinone pool of the respiratory chain. This is Protein-methionine-sulfoxide reductase heme-binding subunit MsrQ from Ralstonia nicotianae (strain ATCC BAA-1114 / GMI1000) (Ralstonia solanacearum).